A 517-amino-acid polypeptide reads, in one-letter code: Steroid 17-alpha-hydroxylase/17,20 lyase (517 aa).

Cys-451 contributes to the heme binding site.

It belongs to the cytochrome P450 family. Requires heme as cofactor.

It localises to the membrane. It carries out the reaction a C21-steroid + reduced [NADPH--hemoprotein reductase] + O2 = a 17alpha-hydroxy-C21-steroid + oxidized [NADPH--hemoprotein reductase] + H2O + H(+). It catalyses the reaction 17alpha-hydroxyprogesterone + reduced [NADPH--hemoprotein reductase] + O2 = androst-4-ene-3,17-dione + acetate + oxidized [NADPH--hemoprotein reductase] + H2O + 2 H(+). The enzyme catalyses 17alpha-hydroxypregnenolone + reduced [NADPH--hemoprotein reductase] + O2 = 3beta-hydroxyandrost-5-en-17-one + acetate + oxidized [NADPH--hemoprotein reductase] + H2O + 2 H(+). It participates in lipid metabolism; steroid biosynthesis. Functionally, conversion of pregnenolone and progesterone to their 17-alpha-hydroxylated products and subsequently to dehydroepiandrosterone (DHEA) and androstenedione. Catalyzes both the 17-alpha-hydroxylation and the 17,20-lyase reaction. The polypeptide is Steroid 17-alpha-hydroxylase/17,20 lyase (cyp17a1) (Oryzias latipes (Japanese rice fish)).